The primary structure comprises 255 residues: Fumarate reductase cytochrome b subunit (255 aa).

Helical transmembrane passes span threonine 33 to isoleucine 53, isoleucine 78 to leucine 98, tryptophan 126 to valine 146, phenylalanine 168 to tyrosine 188, and isoleucine 208 to isoleucine 228. Residues histidine 44, histidine 93, histidine 143, and histidine 182 each coordinate heme b.

It belongs to the diheme cytochrome b FrdC family. In terms of assembly, part of an enzyme complex containing three subunits: a flavoprotein (frdA), an iron-sulfur protein (frdB), and diheme cytochrome b (frdC). The cofactor is heme b.

Its subcellular location is the cell inner membrane. The fumarate reductase enzyme complex is required for fumarate respiration. This subunit anchors the complex in the membrane and binds a diheme cytochrome b. The protein is Fumarate reductase cytochrome b subunit (frdC) of Helicobacter pylori (strain J99 / ATCC 700824) (Campylobacter pylori J99).